A 1362-amino-acid chain; its full sequence is DNA-directed RNA polymerase subunit beta (1362 aa).

It belongs to the RNA polymerase beta chain family. As to quaternary structure, the RNAP catalytic core consists of 2 alpha, 1 beta, 1 beta' and 1 omega subunit. When a sigma factor is associated with the core the holoenzyme is formed, which can initiate transcription.

It carries out the reaction RNA(n) + a ribonucleoside 5'-triphosphate = RNA(n+1) + diphosphate. Functionally, DNA-dependent RNA polymerase catalyzes the transcription of DNA into RNA using the four ribonucleoside triphosphates as substrates. The protein is DNA-directed RNA polymerase subunit beta of Parvibaculum lavamentivorans (strain DS-1 / DSM 13023 / NCIMB 13966).